We begin with the raw amino-acid sequence, 390 residues long: Succinate--CoA ligase [ADP-forming] subunit beta (390 aa).

Positions 9–245 (KHLLKKYNIP…TTQEDEHETM (237 aa)) constitute an ATP-grasp domain. Residues Lys46, 53 to 55 (GRG), Glu99, Ser102, and Glu107 each bind ATP. Positions 200 and 214 each coordinate Mg(2+). Substrate is bound by residues Asn265 and 322 to 324 (GIV).

It belongs to the succinate/malate CoA ligase beta subunit family. In terms of assembly, heterotetramer of two alpha and two beta subunits. It depends on Mg(2+) as a cofactor.

It catalyses the reaction succinate + ATP + CoA = succinyl-CoA + ADP + phosphate. The enzyme catalyses GTP + succinate + CoA = succinyl-CoA + GDP + phosphate. It functions in the pathway carbohydrate metabolism; tricarboxylic acid cycle; succinate from succinyl-CoA (ligase route): step 1/1. In terms of biological role, succinyl-CoA synthetase functions in the citric acid cycle (TCA), coupling the hydrolysis of succinyl-CoA to the synthesis of either ATP or GTP and thus represents the only step of substrate-level phosphorylation in the TCA. The beta subunit provides nucleotide specificity of the enzyme and binds the substrate succinate, while the binding sites for coenzyme A and phosphate are found in the alpha subunit. The sequence is that of Succinate--CoA ligase [ADP-forming] subunit beta from Coxiella burnetii (strain CbuG_Q212) (Coxiella burnetii (strain Q212)).